The following is a 900-amino-acid chain: MYSKVFLKPHCEPEQPAALPLFQPQLVQGGRPDGYWVEAFPFRSDSSKCPNIIGYGLGTYDMKSDIQMLVNPYATTNNQSSSWTPVPLAKLDFPVAMHYADITKNGFNDVIITDQYGSSMDDIWAYGGRVSWLENPGELRDNWTMRTIGHSPGMHRLKAGHFTRTDRVQVVAVPIVVASSDLTTPADVIIFTAPDDPRSEQLWQRDVVGTRHLVHEVAIVPAAETDGEMRFDQIILAGRDGVDCLWYDGARWQRHLVGTGLPEERGDPYWGAGSAAVGRVGDDYAGYICSAEAFHGNTVSVYTKPAGSPTGIVRAEWTRHVLDVFGPLNGKHTGSIHQVVCADIDGDGEDEFLVAMMGADPPDFQRTGVWCYKLVDRTNMKFSKTKVSSVSAGRIATANFHSQGSEVDIATISYSVPGYFESPNPSINVFLSTGILAERLDEEVMLRVVRAGSTRFKTEMEFLDVAGKKLTLVVLPPFARLDVERNVSGVKVMAGTVCWADENGKHERVPATRPFGCESMIVSADYLESGEEGAILVLYKPSSTSGRPPFRSMDELVAHNLFPAYVPDSVRAMKFPWVRCADRPWAHGRFKDLDFFNLIGFHVNFADDSAAVLAHVQLWTAGIGVSAGFHNHVEASFCEIHACIANGTGRGGMRWATVPDANFNPDSPNLEDTELIVVPDMHEHGPLWRTRPDGHPLLRMNDTIDYPWHAWLAGAGNPSPQAFDVWVAFEFPGFETFSTPPPPRVLEPGRYAIRFGDPHQTASLALQKNDATDGTPVLALLDLDGGPSPQAWNISHVPGTDMYEIAHAKTGSLVCARWPPVKNQRVAGTHSPAAMGLTSRWAVTKNTKGQITFRLPEAPDHGPLFLSVSAIRHQQEADAIPVIVQGDSIELSAWSLVPAN.

A dehydratase domain region spans residues 1–433; sequence MYSKVFLKPH…NPSINVFLST (433 aa). Tyrosine 35 is an ascopyrone M binding site. Mg(2+) is bound by residues aspartate 101, threonine 103, asparagine 105, phenylalanine 107, and aspartate 109. 6 residues coordinate ascopyrone M: tyrosine 116, methionine 120, histidine 155, histidine 215, histidine 295, and histidine 337. Residue histidine 155 is the Proton acceptor of the active site. Zn(2+) is bound by residues histidine 215, histidine 295, histidine 337, aspartate 343, aspartate 345, aspartate 347, glutamate 349, and glutamate 351. Ascopyrone M is bound by residues tyrosine 414, tyrosine 419, and alanine 627. Residues 434–739 form an isomerase domain region; sequence GILAERLDEE…EFPGFETFST (306 aa). 1,5-anhydro-D-fructose-binding residues include alanine 627 and histidine 630. Zn(2+) is bound by residues histidine 630, histidine 632, and glutamate 639. Glutamate 639 and histidine 641 together coordinate ascopyrone M. Histidine 641 is a 1,5-anhydro-D-fructose binding site. Histidine 709 contacts Zn(2+). Tryptophan 726 provides a ligand contact to ascopyrone M. Tryptophan 726 serves as a coordination point for 1,5-anhydro-D-fructose.

Homodimer. Requires Zn(2+) as cofactor.

It catalyses the reaction 1,5-anhydro-D-fructose = microthecin + H2O. It carries out the reaction 1,5-anhydro-D-fructose = ascopyrone M + H2O. The enzyme catalyses ascopyrone M = microthecin. The catalysed reaction is 2-dehydro-D-glucose = cortalcerone + H2O. The protein operates within carbohydrate metabolism; 1,5-anhydro-D-fructose degradation. Functionally, a bifunctional enzyme which catalyzes the dehydration of anhydrofructose into ascopyrone M, and the isomerization of ascopyrone M into microthecin. To a lesser extent, can also act on 2-dehydro-D-glucopyranose (D-glucosone), leading to the antibiotic cortalcerone. This chain is Aldos-2-ulose dehydratase, found in Phanerodontia chrysosporium (White-rot fungus).